The sequence spans 149 residues: Calmodulin (149 aa).

Ala-2 is subject to N-acetylalanine. EF-hand domains follow at residues 8–43 (EQIAEFKEAFSLFDKDGDGTITTKELGTVMRSLGQN), 44–79 (PTEAELLVMINEVDADGNGTIDFPEFLTMMARKMKD), 81–116 (DSEEEIKEAFKVFDKDGNGYISAAELRHVMTNLGEK), and 117–149 (LSEDEVEEMIREADVDGDGQINYEEFVKMMMSK). The Ca(2+) site is built by Asp-21, Asp-23, Asp-25, Thr-27, Glu-32, Asp-57, Asp-59, Asn-61, Thr-63, Glu-68, Asp-94, Asp-96, Asn-98, Tyr-100, Glu-105, Asp-130, Asp-132, Asp-134, Gln-136, and Glu-141.

This sequence belongs to the calmodulin family.

Calmodulin mediates the control of a large number of enzymes, ion channels and other proteins by Ca(2+). Among the enzymes to be stimulated by the calmodulin-Ca(2+) complex are a number of protein kinases and phosphatases. This is Calmodulin (CMD1) from Blastocladiella emersonii (Aquatic fungus).